The sequence spans 450 residues: 3',5'-cyclic-AMP phosphodiesterase 7B (450 aa).

Positions 97–420 (LDEDYLGQAR…AQWKSLLPRQ (324 aa)) constitute a PDEase domain. The Proton donor role is filled by H173. Positions 177, 213, 214, and 323 each coordinate a divalent metal cation. The interval 418-450 (PRQHRSRGSSGSGPDHDHAGQGTESEEQEGDSP) is disordered. At S426 the chain carries Phosphoserine. Positions 441-450 (ESEEQEGDSP) are enriched in acidic residues.

Belongs to the cyclic nucleotide phosphodiesterase family. PDE7 subfamily. The cofactor is a divalent metal cation. As to expression, highly expressed in brain. Also expressed in heart, liver, skeletal muscle and pancreas.

It carries out the reaction 3',5'-cyclic AMP + H2O = AMP + H(+). The protein operates within purine metabolism; 3',5'-cyclic AMP degradation; AMP from 3',5'-cyclic AMP: step 1/1. Its activity is regulated as follows. Inhibited by dipyridamole, IBMX and SCH 51866. Insensitive to zaprinast, rolipram, and milrinone. In terms of biological role, hydrolyzes the second messenger cAMP, which is a key regulator of many important physiological processes. May be involved in the control of cAMP-mediated neural activity and cAMP metabolism in the brain. This chain is 3',5'-cyclic-AMP phosphodiesterase 7B, found in Homo sapiens (Human).